Consider the following 633-residue polypeptide: RpoH suppressor (633 aa).

A PNPLA domain is found at 11–410 (LVMKGGITSG…SSNFPIHLFD (400 aa)). 3 helical membrane passes run 38-58 (NIGG…AAVG), 133-153 (IAPV…YAVG), and 159-179 (IAAA…FAVL). The short motif at 41 to 45 (GTSAG) is the GXSXG element. Serine 43 acts as the Nucleophile in catalysis. Residues 342 to 380 (ARRESLPGSDGENEAEDTTSDEDEQKTVLDSTEALTTGG) form a disordered region. A compositionally biased stretch (acidic residues) spans 352-365 (GENEAEDTTSDEDE). The active-site Proton acceptor is the aspartate 397. The short motif at 397-399 (DGG) is the DGA/G element. Residues 605–624 (EGEKWSGEGPDLTKTAPRPL) form a disordered region.

It localises to the cell membrane. Functionally, this protein is non-essential for R.meliloti growth, but induces a heat-shock response in temperature-sensitive E.coli K165 by elevating levels of sigma 32 (mechanism unknown). This Rhizobium meliloti (strain 1021) (Ensifer meliloti) protein is RpoH suppressor (suhR).